We begin with the raw amino-acid sequence, 201 residues long: Small ribosomal subunit protein uS4c (201 aa).

Residues 89–150 enclose the S4 RNA-binding domain; that stretch reads MRLDNIVFRL…RQKSQAIITK (62 aa).

It belongs to the universal ribosomal protein uS4 family. In terms of assembly, part of the 30S ribosomal subunit. Contacts protein S5. The interaction surface between S4 and S5 is involved in control of translational fidelity.

Its subcellular location is the plastid. It is found in the chloroplast. Functionally, one of the primary rRNA binding proteins, it binds directly to 16S rRNA where it nucleates assembly of the body of the 30S subunit. Its function is as follows. With S5 and S12 plays an important role in translational accuracy. The polypeptide is Small ribosomal subunit protein uS4c (rps4) (Funaria hygrometrica (Moss)).